A 1085-amino-acid polypeptide reads, in one-letter code: Solute carrier family 12 member 4 (1085 aa).

At 1-119 (MPHFTVVPVD…RRAAEAPSMG (119 aa)) the chain is on the cytoplasmic side. 5 positions are modified to phosphoserine: Ser24, Ser47, Ser51, Ser81, and Ser88. The chain crosses the membrane as a discontinuously helical span at residues 120–141 (TLMGVYLPCLQNIFGVILFLRL). Asn131 and Ile132 together coordinate K(+). At 142 to 149 (TWMVGTAG) the chain is on the extracellular side. A helical membrane pass occupies residues 150 to 172 (VLQALLIVLICCCCTLLTAISMS). The Cytoplasmic segment spans residues 173–196 (AIATNGVVPAGGSYFMISRSLGPE). A helical membrane pass occupies residues 197 to 225 (FGGAVGLCFYLGTTFAAAMYILGAIEILL). Residue Tyr216 coordinates K(+). Topologically, residues 226-248 (TYIAPPAAIFYPSGAHDTSNATL) are extracellular. The N-linked (GlcNAc...) asparagine glycan is linked to Asn245. Transmembrane regions (helical) follow at residues 249-271 (NNMR…VGVK) and 272-297 (YVNK…GGIK). Residues 298-419 (SIFDPPVFPV…LYVVADIATS (122 aa)) lie on the Extracellular side of the membrane. Cys308 and Cys323 are joined by a disulfide. N-linked (GlcNAc...) asparagine glycans are attached at residues Asn312, Asn331, Asn347, and Asn361. Residues Cys343 and Cys353 are joined by a disulfide bond. A helical membrane pass occupies residues 420–440 (FTVLVGIFFPSVTGIMAGSNR). Positions 429 and 432 each coordinate K(+). Residues Gly433, Ile434, and Met435 each contribute to the chloride site. The Cytoplasmic portion of the chain corresponds to 441-450 (SGDLRDAQKS). Residues 451–473 (IPVGTILAIITTSLVYFSSVVLF) form a helical membrane-spanning segment. Topologically, residues 474-504 (GACIEGVVLRDKYGDGVSRNLVVGTLAWPSP) are extracellular. Residues 505 to 531 (WVIVIGSFFSTCGAGLQSLTGAPRLLQ) traverse the membrane as a helical segment. Residues 532 to 554 (AIAKDNIIPFLRVFGHGKVNGEP) lie on the Cytoplasmic side of the membrane. The next 2 helical transmembrane spans lie at 555–575 (TWAL…ASLD) and 576–598 (MVAP…ACAV). Tyr589 lines the chloride pocket. At 599 to 612 (QTLLRTPNWRPRFK) the chain is on the cytoplasmic side. The next 2 helical transmembrane spans lie at 613–635 (YYHW…VSSW) and 636–651 (YYAL…IYKY). Over 652–1085 (IEYQGAEKEW…GGREVITIYS (434 aa)) the chain is Cytoplasmic. Positions 665-681 (IRGLSLSAARYALLRLE) are scissor helix. ATP is bound by residues Leu697, Lys699, Lys707, Tyr708, and Val730. Ser734 bears the Phosphoserine mark. Positions 794, 795, and 797 each coordinate ATP. 2 positions are modified to phosphoserine: Ser916 and Ser967. At Thr983 the chain carries Phosphothreonine. Ser1050 is subject to Phosphoserine.

This sequence belongs to the SLC12A transporter family. K/Cl co-transporter subfamily. In terms of assembly, homodimer; adopts a domain-swap conformation at the scissor helices connecting the transmembrane domain and C-terminal domain. Heterodimer with other K-Cl cotransporters. Phosphorylated, phosphorylation may regulate transporter activity. In terms of tissue distribution, ubiquitous. Levels are much higher in erythrocytes from patients with Hb SC and Hb SS compared to normal AA erythrocytes. This may contribute to red blood cell dehydration and to the manifestation of sickle cell disease by increasing the intracellular concentration of HbS. Not detected in circulating reticulocytes.

It is found in the cell membrane. The enzyme catalyses K(+)(in) + chloride(in) = K(+)(out) + chloride(out). Its activity is regulated as follows. Inhibited by WNK3. Mediates electroneutral potassium-chloride cotransport when activated by cell swelling. May contribute to cell volume homeostasis in single cells. May be involved in the regulation of basolateral Cl(-) exit in NaCl absorbing epithelia. Its function is as follows. No transporter activity. This is Solute carrier family 12 member 4 from Homo sapiens (Human).